A 475-amino-acid polypeptide reads, in one-letter code: Ribulose bisphosphate carboxylase large chain (475 aa).

Residues 1–2 constitute a propeptide that is removed on maturation; it reads MS. At Pro3 the chain carries N-acetylproline. At Lys14 the chain carries N6,N6,N6-trimethyllysine. The substrate site is built by Asn123 and Thr173. Residue Lys175 is the Proton acceptor of the active site. Lys177 serves as a coordination point for substrate. 3 residues coordinate Mg(2+): Lys201, Asp203, and Glu204. At Lys201 the chain carries N6-carboxylysine. The active-site Proton acceptor is His294. The substrate site is built by Arg295, His327, and Ser379.

It belongs to the RuBisCO large chain family. Type I subfamily. In terms of assembly, heterohexadecamer of 8 large chains and 8 small chains; disulfide-linked. The disulfide link is formed within the large subunit homodimers. Mg(2+) is required as a cofactor. The disulfide bond which can form in the large chain dimeric partners within the hexadecamer appears to be associated with oxidative stress and protein turnover.

The protein resides in the plastid. The protein localises to the chloroplast. The enzyme catalyses 2 (2R)-3-phosphoglycerate + 2 H(+) = D-ribulose 1,5-bisphosphate + CO2 + H2O. It catalyses the reaction D-ribulose 1,5-bisphosphate + O2 = 2-phosphoglycolate + (2R)-3-phosphoglycerate + 2 H(+). Its function is as follows. RuBisCO catalyzes two reactions: the carboxylation of D-ribulose 1,5-bisphosphate, the primary event in carbon dioxide fixation, as well as the oxidative fragmentation of the pentose substrate in the photorespiration process. Both reactions occur simultaneously and in competition at the same active site. The chain is Ribulose bisphosphate carboxylase large chain from Amaranthus tricolor (Joseph's coat).